The primary structure comprises 1324 residues: RNA2 polyprotein (1324 aa).

The protein belongs to the nepoviruses RNA2 polyprotein family. Specific enzymatic cleavages in vivo by the P1 encoded 3C-like protease yield mature proteins. Post-translationally, the N-terminus of the coat protein is blocked.

It localises to the host cell junction. The protein localises to the host plasmodesma. The protein resides in the host cytoplasm. It is found in the host nucleus. Its subcellular location is the virion. In terms of biological role, implicated in RNA2 replication. Could also be required for nematode transmission of the virus. Its function is as follows. Transports viral genome to neighboring plant cells directly through plasmosdesmata, without any budding. The movement protein allows efficient cell to cell propagation, by bypassing the host cell wall barrier. Acts by forming a tubular structure at the host plasmodesmata, enlarging it enough to allow free passage of virion capsids. The protein is RNA2 polyprotein of Apium graveolens (Celery).